A 122-amino-acid chain; its full sequence is Putative iron-sulfur cluster insertion protein ErpA (122 aa).

Iron-sulfur cluster-binding residues include cysteine 50, cysteine 114, and cysteine 116.

It belongs to the HesB/IscA family. As to quaternary structure, homodimer. Requires iron-sulfur cluster as cofactor.

Its function is as follows. Required for insertion of 4Fe-4S clusters. In Burkholderia mallei (strain NCTC 10247), this protein is Putative iron-sulfur cluster insertion protein ErpA.